The following is a 195-amino-acid chain: Dephospho-CoA kinase (195 aa).

Residues 4–195 (IIGLTGGIAS…EQILDALQRL (192 aa)) form the DPCK domain. Position 12-17 (12-17 (ASGKST)) interacts with ATP.

The protein belongs to the CoaE family.

Its subcellular location is the cytoplasm. The enzyme catalyses 3'-dephospho-CoA + ATP = ADP + CoA + H(+). Its pathway is cofactor biosynthesis; coenzyme A biosynthesis; CoA from (R)-pantothenate: step 5/5. Its function is as follows. Catalyzes the phosphorylation of the 3'-hydroxyl group of dephosphocoenzyme A to form coenzyme A. The chain is Dephospho-CoA kinase from Streptococcus agalactiae serotype III (strain NEM316).